Here is a 167-residue protein sequence, read N- to C-terminus: NADH-ubiquinone oxidoreductase chain 6 (167 aa).

The next 4 helical transmembrane spans lie at 5-25, 34-54, 60-80, and 138-158; these read IIML…TIYL, MLLI…FTMC, LILM…SYFI, and FFIM…ITYI.

Belongs to the complex I subunit 6 family.

Its subcellular location is the mitochondrion membrane. It carries out the reaction a ubiquinone + NADH + 5 H(+)(in) = a ubiquinol + NAD(+) + 4 H(+)(out). Functionally, core subunit of the mitochondrial membrane respiratory chain NADH dehydrogenase (Complex I) that is believed to belong to the minimal assembly required for catalysis. Complex I functions in the transfer of electrons from NADH to the respiratory chain. The immediate electron acceptor for the enzyme is believed to be ubiquinone. The polypeptide is NADH-ubiquinone oxidoreductase chain 6 (ND6) (Apis mellifera ligustica (Common honeybee)).